The sequence spans 77 residues: Large ribosomal subunit protein uL29 (77 aa).

Belongs to the universal ribosomal protein uL29 family.

The chain is Large ribosomal subunit protein uL29 (rpmC) from Mycobacterium bovis (strain ATCC BAA-935 / AF2122/97).